Consider the following 440-residue polypeptide: Xaa-Pro dipeptidase (440 aa).

Mn(2+) is bound by residues aspartate 244, aspartate 255, histidine 335, glutamate 380, and glutamate 419.

This sequence belongs to the peptidase M24B family. Bacterial-type prolidase subfamily. Mn(2+) is required as a cofactor.

The enzyme catalyses Xaa-L-Pro dipeptide + H2O = an L-alpha-amino acid + L-proline. Its function is as follows. Splits dipeptides with a prolyl residue in the C-terminal position. The chain is Xaa-Pro dipeptidase from Shewanella halifaxensis (strain HAW-EB4).